A 203-amino-acid polypeptide reads, in one-letter code: Potassium channel Cha6605_3372 (203 aa).

The Cytoplasmic segment spans residues 1–7; it reads MVEAPEQ. Residues 8 to 31 form a helical membrane-spanning segment; that stretch reads SETGRIEAFSDGVFAIAITLLVLE. The RxxxFSD motif motif lies at 12 to 18; sequence RIEAFSD. At 32–52 the chain is on the extracellular side; sequence IKVPQHKIVETVGLVSSLLSL. The interval 37 to 42 is short helix H1; it reads HKIVET. The short helix H2 stretch occupies residues 44-50; that stretch reads GLVSSLL. The chain crosses the membrane as a helical span at residues 53 to 78; it reads WPSYLAFLTSFASILVMWVNHHRIFS. Topologically, residues 79–84 are cytoplasmic; it reads LVARTD. The chain crosses the membrane as a helical span at residues 85–110; sequence HAFFYWNGLLLMLVTFVPFPTALLAE. At 111 to 117 the chain is on the extracellular side; that stretch reads YLIHPQA. Residues 118–142 form a helical membrane-spanning segment; sequence RVAASVYAGIFLAIAIVFNRLWKHA. Topologically, residues 143–154 are cytoplasmic; the sequence is ATADRLLAQKAD. A helical transmembrane segment spans residues 155 to 181; it reads RHEVDAITKQYRFGPGLYLVAFALSFI. Residues 182–183 are Extracellular-facing; it reads SV. The helical transmembrane segment at 184-199 threads the bilayer; the sequence is WLSVGVCFVLAIYFAL. Residues 200 to 203 lie on the Cytoplasmic side of the membrane; it reads RSNA.

The protein belongs to the TMEM175 family. Homotetramer.

It localises to the membrane. The catalysed reaction is K(+)(in) = K(+)(out). In terms of biological role, potassium channel. The channel is permeable for K(+), Rb(+) and Cs(+), while it is unable to conduct Na(+). The protein is Potassium channel Cha6605_3372 of Chamaesiphon minutus (strain ATCC 27169 / PCC 6605).